The primary structure comprises 172 residues: Crossover junction endodeoxyribonuclease RuvC (172 aa).

Catalysis depends on residues D11, E70, and D142. Mg(2+) is bound by residues D11, E70, and D142.

Belongs to the RuvC family. In terms of assembly, homodimer which binds Holliday junction (HJ) DNA. The HJ becomes 2-fold symmetrical on binding to RuvC with unstacked arms; it has a different conformation from HJ DNA in complex with RuvA. In the full resolvosome a probable DNA-RuvA(4)-RuvB(12)-RuvC(2) complex forms which resolves the HJ. It depends on Mg(2+) as a cofactor.

The protein localises to the cytoplasm. The catalysed reaction is Endonucleolytic cleavage at a junction such as a reciprocal single-stranded crossover between two homologous DNA duplexes (Holliday junction).. In terms of biological role, the RuvA-RuvB-RuvC complex processes Holliday junction (HJ) DNA during genetic recombination and DNA repair. Endonuclease that resolves HJ intermediates. Cleaves cruciform DNA by making single-stranded nicks across the HJ at symmetrical positions within the homologous arms, yielding a 5'-phosphate and a 3'-hydroxyl group; requires a central core of homology in the junction. The consensus cleavage sequence is 5'-(A/T)TT(C/G)-3'. Cleavage occurs on the 3'-side of the TT dinucleotide at the point of strand exchange. HJ branch migration catalyzed by RuvA-RuvB allows RuvC to scan DNA until it finds its consensus sequence, where it cleaves and resolves the cruciform DNA. The protein is Crossover junction endodeoxyribonuclease RuvC of Hydrogenovibrio crunogenus (strain DSM 25203 / XCL-2) (Thiomicrospira crunogena).